The sequence spans 489 residues: Probable transporter MCH1 (489 aa).

3 consecutive transmembrane segments (helical) span residues 30 to 50 (IAYI…LISL), 68 to 88 (MIVT…GIIA), and 92 to 112 (GPIT…AYLA). An N-linked (GlcNAc...) asparagine glycan is attached at asparagine 123. 8 consecutive transmembrane segments (helical) span residues 132-152 (TLVC…SALI), 163-183 (LLSI…GSQF), 202-222 (VFKA…IATS), 279-299 (VLYI…MFIA), 307-327 (VLAG…YALT), 351-371 (WILL…YMLS), 388-408 (FYIG…YPTI), and 421-441 (AYGT…LIYA). A glycan (N-linked (GlcNAc...) asparagine) is linked at asparagine 450. A helical membrane pass occupies residues 462–482 (ETTALEFCAAILLTVVVTVLW).

Belongs to the major facilitator superfamily.

It is found in the vacuole membrane. Its function is as follows. Probable transporter. This is Probable transporter MCH1 (MCH1) from Candida glabrata (strain ATCC 2001 / BCRC 20586 / JCM 3761 / NBRC 0622 / NRRL Y-65 / CBS 138) (Yeast).